Here is a 355-residue protein sequence, read N- to C-terminus: Guanine nucleotide-binding protein G(i) subunit alpha-2 (355 aa).

The N-myristoyl glycine moiety is linked to residue Gly2. The S-palmitoyl cysteine moiety is linked to residue Cys3. In terms of domain architecture, G-alpha spans 32–355 (REVKLLLLGA…KNNLKDCGLF (324 aa)). The tract at residues 35-48 (KLLLLGAGESGKST) is G1 motif. Residues 40-47 (GAGESGKS), 176-182 (LRTRVKT), 201-205 (DVGGQ), 270-273 (NKKD), and Ala327 each bind GTP. Residues Ser47 and Thr182 each coordinate Mg(2+). The segment at 174–182 (DVLRTRVKT) is G2 motif. Positions 197–206 (FKMFDVGGQR) are G3 motif. Positions 266–273 (ILFLNKKD) are G4 motif. Residues 325-330 (TCATDT) form a G5 motif region.

Belongs to the G-alpha family. G(i/o/t/z) subfamily. As to quaternary structure, g proteins are composed of 3 units; alpha, beta and gamma. The alpha chain contains the guanine nucleotide binding site.

It localises to the cytoplasm. It is found in the cytoskeleton. The protein resides in the microtubule organizing center. The protein localises to the centrosome. Its subcellular location is the cell membrane. Its function is as follows. Guanine nucleotide-binding proteins (G proteins) are involved as modulators or transducers in various transmembrane signaling systems. The G(i) proteins are involved in hormonal regulation of adenylate cyclase: they inhibit the cyclase in response to beta-adrenergic stimuli. May play a role in cell division. This chain is Guanine nucleotide-binding protein G(i) subunit alpha-2 (GNAI2), found in Gallus gallus (Chicken).